The chain runs to 108 residues: Glutaredoxin-1 (108 aa).

In terms of domain architecture, Glutaredoxin spans 3 to 106 (EEFVQQRLAN…DILSSIGVLR (104 aa)). A disulfide bridge connects residues Cys23 and Cys26.

It belongs to the glutaredoxin family.

The protein resides in the virion. Displays thioltransferase and dehydroascorbate reductase activities. This chain is Glutaredoxin-1 (OPG075), found in Vaccinia virus (strain Copenhagen) (VACV).